A 218-amino-acid chain; its full sequence is Ras-related protein RABA5e (218 aa).

19 to 26 is a GTP binding site; that stretch reads GDSAVGKS. The Effector region signature appears at 41–49; sequence SKATIGVEF. Residues 67-71, 125-128, and 155-156 contribute to the GTP site; these read DTAGQ, NKCD, and SA. S-geranylgeranyl cysteine attachment occurs at residues Cys-214 and Cys-215. Cys-215 is modified (cysteine methyl ester). The propeptide at 216-218 is removed in mature form; sequence SST.

The protein belongs to the small GTPase superfamily. Rab family.

The protein resides in the cell membrane. Intracellular vesicle trafficking and protein transport. The chain is Ras-related protein RABA5e (RABA5E) from Arabidopsis thaliana (Mouse-ear cress).